A 306-amino-acid chain; its full sequence is Ribonuclease H2 subunit B (306 aa).

The disordered stretch occupies residues 232-285 (LPDLSSPTPEPPVKKRRVSDAPVEADEDYTKYNSDNKSRKSNSKMTAAQKSLAK). The segment covering 259–269 (DYTKYNSDNKS) has biased composition (basic and acidic residues).

It belongs to the RNase H2 subunit B family. In terms of assembly, the RNase H2 complex is a heterotrimer composed of the catalytic subunit RNASEH2A and the non-catalytic subunits RNASEH2B and RNASEH2C.

Its subcellular location is the nucleus. Functionally, non catalytic subunit of RNase H2, an endonuclease that specifically degrades the RNA of RNA:DNA hybrids. Participates in DNA replication, possibly by mediating the removal of lagging-strand Okazaki fragment RNA primers during DNA replication. Mediates the excision of single ribonucleotides from DNA:RNA duplexes. The polypeptide is Ribonuclease H2 subunit B (rnaseh2b) (Xenopus laevis (African clawed frog)).